The following is a 150-amino-acid chain: UPF0179 protein Mbur_1033 (150 aa).

The protein belongs to the UPF0179 family.

This is UPF0179 protein Mbur_1033 from Methanococcoides burtonii (strain DSM 6242 / NBRC 107633 / OCM 468 / ACE-M).